The sequence spans 369 residues: MWQEYYFLNVFFPLLKVCCLTINSHVVILLPWECYHLIWKILPYIGTTVGSMEEYNTSSTDFTFMGLFNRKETSGLIFAIISIIFFTALMANGVMIFLIQTDLRLHTPMYFLLSHLSLIDMMYISTIVPKMLVNYLLDQRTISFVGCTAQHFLYLTLVGAEFFLLGLMAYDRYVAICNPLRYPVLMSRRVCWMIIAGSWFGGSLDGFLLTPITMSFPFCNSREINHFFCEAPAVLKLACADTALYETVMYVCCVLMLLIPFSVVLASYARILTTVQCMSSVEGRKKAFATCSSHMTVVSLFYGAAMYTYMLPHSYHKPAQDKVLSVFYTILTPMLNPLIYSLRNKDVTGALKRALGRFKGPQRVSGGVF.

Residues 1–76 (MWQEYYFLNV…LFNRKETSGL (76 aa)) lie on the Extracellular side of the membrane. N-linked (GlcNAc...) asparagine glycosylation occurs at asparagine 56. A helical transmembrane segment spans residues 77 to 97 (IFAIISIIFFTALMANGVMIF). Residues 98 to 107 (LIQTDLRLHT) are Cytoplasmic-facing. The chain crosses the membrane as a helical span at residues 108-128 (PMYFLLSHLSLIDMMYISTIV). Residues 129–148 (PKMLVNYLLDQRTISFVGCT) are Extracellular-facing. An intrachain disulfide couples cysteine 147 to cysteine 239. A helical membrane pass occupies residues 149–169 (AQHFLYLTLVGAEFFLLGLMA). Residues 170–191 (YDRYVAICNPLRYPVLMSRRVC) are Cytoplasmic-facing. The helical transmembrane segment at 192-212 (WMIIAGSWFGGSLDGFLLTPI) threads the bilayer. Topologically, residues 213–247 (TMSFPFCNSREINHFFCEAPAVLKLACADTALYET) are extracellular. A helical transmembrane segment spans residues 248–268 (VMYVCCVLMLLIPFSVVLASY). Topologically, residues 269-286 (ARILTTVQCMSSVEGRKK) are cytoplasmic. The chain crosses the membrane as a helical span at residues 287-307 (AFATCSSHMTVVSLFYGAAMY). At 308 to 321 (TYMLPHSYHKPAQD) the chain is on the extracellular side. A helical transmembrane segment spans residues 322–342 (KVLSVFYTILTPMLNPLIYSL). Over 343-369 (RNKDVTGALKRALGRFKGPQRVSGGVF) the chain is Cytoplasmic.

The protein belongs to the G-protein coupled receptor 1 family.

It is found in the cell membrane. In terms of biological role, odorant receptor. In Homo sapiens (Human), this protein is Olfactory receptor 2T1 (OR2T1).